Reading from the N-terminus, the 288-residue chain is Quinate/shikimate dehydrogenase (288 aa).

Substrate contacts are provided by lysine 71 and aspartate 107. NAD(+) is bound by residues 132–135 (AGGA), 155–158 (NRRD), lysine 205, 232–235 (CVYN), and glycine 255.

This sequence belongs to the shikimate dehydrogenase family. Homodimer.

The enzyme catalyses L-quinate + NAD(+) = 3-dehydroquinate + NADH + H(+). The catalysed reaction is L-quinate + NADP(+) = 3-dehydroquinate + NADPH + H(+). It carries out the reaction shikimate + NADP(+) = 3-dehydroshikimate + NADPH + H(+). It catalyses the reaction shikimate + NAD(+) = 3-dehydroshikimate + NADH + H(+). It functions in the pathway metabolic intermediate biosynthesis; chorismate biosynthesis; chorismate from D-erythrose 4-phosphate and phosphoenolpyruvate: step 4/7. Functionally, the actual biological function of YdiB remains unclear, nor is it known whether 3-dehydroshikimate or quinate represents the natural substrate. Catalyzes the reversible NAD-dependent reduction of both 3-dehydroshikimate (DHSA) and 3-dehydroquinate to yield shikimate (SA) and quinate, respectively. It can use both NAD or NADP for catalysis, however it has higher catalytic efficiency with NAD. The polypeptide is Quinate/shikimate dehydrogenase (Escherichia coli O81 (strain ED1a)).